Reading from the N-terminus, the 337-residue chain is DNA-directed RNA polymerase subunit alpha (337 aa).

Positions 1 to 231 (MRNITISAYT…KQLSVFDKIT (231 aa)) are alpha N-terminal domain (alpha-NTD). Residues 248–337 (NTKLLQNITD…IAELKAQNEG (90 aa)) are alpha C-terminal domain (alpha-CTD).

This sequence belongs to the RNA polymerase alpha chain family. As to quaternary structure, homodimer. The RNAP catalytic core consists of 2 alpha, 1 beta, 1 beta' and 1 omega subunit. When a sigma factor is associated with the core the holoenzyme is formed, which can initiate transcription.

The catalysed reaction is RNA(n) + a ribonucleoside 5'-triphosphate = RNA(n+1) + diphosphate. Its function is as follows. DNA-dependent RNA polymerase catalyzes the transcription of DNA into RNA using the four ribonucleoside triphosphates as substrates. The chain is DNA-directed RNA polymerase subunit alpha from Campylobacter jejuni subsp. doylei (strain ATCC BAA-1458 / RM4099 / 269.97).